The following is a 423-amino-acid chain: Large ribosomal subunit protein mL37 (423 aa).

A mitochondrion-targeting transit peptide spans 1 to 29; that stretch reads MALASGPARRVLARPWGLGLEGCGVPRRG.

It belongs to the mitochondrion-specific ribosomal protein mL37 family. As to quaternary structure, component of the mitochondrial ribosome large subunit (39S) which comprises a 16S rRNA and about 50 distinct proteins.

It localises to the mitochondrion. In Bos taurus (Bovine), this protein is Large ribosomal subunit protein mL37 (MRPL37).